Reading from the N-terminus, the 284-residue chain is NAD kinase (284 aa).

Residue D70 is the Proton acceptor of the active site. NAD(+)-binding positions include 70 to 71, 139 to 140, K167, D169, L177, 180 to 185, and Q236; these read DG, NE, and TAYNLS.

It belongs to the NAD kinase family. A divalent metal cation is required as a cofactor.

The protein resides in the cytoplasm. The enzyme catalyses NAD(+) + ATP = ADP + NADP(+) + H(+). Involved in the regulation of the intracellular balance of NAD and NADP, and is a key enzyme in the biosynthesis of NADP. Catalyzes specifically the phosphorylation on 2'-hydroxyl of the adenosine moiety of NAD to yield NADP. This is NAD kinase from Helicobacter pylori (strain G27).